A 124-amino-acid polypeptide reads, in one-letter code: Aspartate 1-decarboxylase (124 aa).

Residue Ser21 is the Schiff-base intermediate with substrate; via pyruvic acid of the active site. Pyruvic acid (Ser) is present on Ser21. Substrate is bound at residue Thr53. Tyr54 functions as the Proton donor in the catalytic mechanism. 69-71 contacts substrate; it reads GAA.

It belongs to the PanD family. In terms of assembly, heterooctamer of four alpha and four beta subunits. Requires pyruvate as cofactor. In terms of processing, is synthesized initially as an inactive proenzyme, which is activated by self-cleavage at a specific serine bond to produce a beta-subunit with a hydroxyl group at its C-terminus and an alpha-subunit with a pyruvoyl group at its N-terminus.

Its subcellular location is the cytoplasm. It catalyses the reaction L-aspartate + H(+) = beta-alanine + CO2. The protein operates within cofactor biosynthesis; (R)-pantothenate biosynthesis; beta-alanine from L-aspartate: step 1/1. Its function is as follows. Catalyzes the pyruvoyl-dependent decarboxylation of aspartate to produce beta-alanine. The sequence is that of Aspartate 1-decarboxylase from Dehalococcoides mccartyi (strain ATCC BAA-2266 / KCTC 15142 / 195) (Dehalococcoides ethenogenes (strain 195)).